Here is a 179-residue protein sequence, read N- to C-terminus: Large ribosomal subunit protein uL5 (179 aa).

It belongs to the universal ribosomal protein uL5 family. In terms of assembly, part of the 50S ribosomal subunit; part of the 5S rRNA/L5/L18/L25 subcomplex. Contacts the 5S rRNA and the P site tRNA. Forms a bridge to the 30S subunit in the 70S ribosome.

In terms of biological role, this is one of the proteins that bind and probably mediate the attachment of the 5S RNA into the large ribosomal subunit, where it forms part of the central protuberance. In the 70S ribosome it contacts protein S13 of the 30S subunit (bridge B1b), connecting the 2 subunits; this bridge is implicated in subunit movement. Contacts the P site tRNA; the 5S rRNA and some of its associated proteins might help stabilize positioning of ribosome-bound tRNAs. This chain is Large ribosomal subunit protein uL5, found in Burkholderia cenocepacia (strain HI2424).